The chain runs to 484 residues: MEKSWFNLMFSKGELESRGELSKAMDSFAPSEKTTISQDRFIYDMDKNFYGWGERSSYSNNVDLLVSSKDIRNFISDDTFFVRDSNKNSYSIYFDIKKKFFEIDNDFSDLEIFFYNYCSSSYLNNRSKGDNDLHYDPYIKDTKYNCTNHINSCIDSYFRSHICIDSNFLSNSKNSNESYIYNFICSESGKIRESKNYKIRTNRNRSNLISSKDFDITQNYNQLWIQCDNCYGLMYKKVKMNVCEQCGHYLKMSSSERIELSIDPGTWNPMDEDMVSADPIKFHSKEEPYKNRIDSAQKTTGLTDAVQTGTGQLNGIPVALGVMDFQFMGGSMGSVVGEKITRLIEYATNQCLPLILVCSSGGARMQEGSLSLMQMAKISSVLCDYQSSKKLFYISILTSPTTGGVTASFGMLGDIIIAEPYAYIAFAGKRVIEQTLKKAVPDGSQAAESLLRKGLLDAIVPRNLLKGVLRELFQLHAFFPLNKN.

The CoA carboxyltransferase N-terminal domain occupies 223-484 (LWIQCDNCYG…LHAFFPLNKN (262 aa)). Positions 227, 230, 243, and 246 each coordinate Zn(2+). A C4-type zinc finger spans residues 227-246 (CDNCYGLMYKKVKMNVCEQC).

It belongs to the AccD/PCCB family. Acetyl-CoA carboxylase is a heterohexamer composed of biotin carboxyl carrier protein, biotin carboxylase and 2 subunits each of ACCase subunit alpha and ACCase plastid-coded subunit beta (accD). Requires Zn(2+) as cofactor.

It localises to the plastid. The protein resides in the chloroplast stroma. It carries out the reaction N(6)-carboxybiotinyl-L-lysyl-[protein] + acetyl-CoA = N(6)-biotinyl-L-lysyl-[protein] + malonyl-CoA. It functions in the pathway lipid metabolism; malonyl-CoA biosynthesis; malonyl-CoA from acetyl-CoA: step 1/1. Its function is as follows. Component of the acetyl coenzyme A carboxylase (ACC) complex. Biotin carboxylase (BC) catalyzes the carboxylation of biotin on its carrier protein (BCCP) and then the CO(2) group is transferred by the transcarboxylase to acetyl-CoA to form malonyl-CoA. This Crucihimalaya wallichii (Rock-cress) protein is Acetyl-coenzyme A carboxylase carboxyl transferase subunit beta, chloroplastic.